A 219-amino-acid chain; its full sequence is MALARQCLSKRLAAGCALARPLHAASPVAAAAANSHGPLNFRALFSSAGADAAATTGGCAPAKGDGHSREVAVVDRSRRRWPWRDLRDFVPLRLVDGIGSALSQVAETLTRPLTGKVREDEERYRLRFEVPGLGKDDVRVYVDDGVLAIHGEKRDVVEEDRGRDGDGECWAAATYHAGLLLPEDAVAEGITAEVRDGVLHVTVPRSPERKRSVTEVKVR.

The N-terminal 29 residues, 1 to 29 (MALARQCLSKRLAAGCALARPLHAASPVA), are a transit peptide targeting the mitochondrion. The 116-residue stretch at 104–219 (QVAETLTRPL…KRSVTEVKVR (116 aa)) folds into the sHSP domain.

This sequence belongs to the small heat shock protein (HSP20) family. As to quaternary structure, may form oligomeric structures.

The protein localises to the mitochondrion. The sequence is that of 23.6 kDa heat shock protein, mitochondrial (HSP23.6) from Oryza sativa subsp. japonica (Rice).